The sequence spans 789 residues: 1-phosphatidylinositol 4,5-bisphosphate phosphodiesterase delta-3 (789 aa).

Positions Arg63 to Ala172 constitute a PH domain. The tract at residues Lys73–Pro101 is substrate binding. Ser105 is subject to Phosphoserine. 3 EF-hand domains span residues Arg182–Asp217, Met218–Arg253, and Leu250–Glu285. Residues Asp195, Asn197, Asp199, Lys201, Glu206, Asp231, Ser233, Asn235, Arg237, and Glu242 each contribute to the Ca(2+) site. One can recognise a PI-PLC X-box domain in the interval Gln337–Lys482. The active site involves His352. Residues Asn353, Glu382, and Asp384 each coordinate Ca(2+). Residue His397 is part of the active site. Residue Glu431 participates in Ca(2+) binding. The disordered stretch occupies residues Ser461–Arg519. Substrate-binding residues include Lys480 and Lys482. The span at Arg488 to Asp497 shows a compositional bias: basic and acidic residues. Ser496 carries the post-translational modification Phosphoserine. The span at Arg498 to Glu513 shows a compositional bias: acidic residues. The PI-PLC Y-box domain occupies Leu528 to Arg644. Ser557 contacts substrate. The residue at position 573 (Ser573) is a Phosphoserine. A substrate-binding site is contributed by Arg584. Residues Arg644–Ser769 enclose the C2 domain. The Ca(2+) site is built by Ile683, Asp685, Asn709, Asp738, Tyr739, and Asp740.

It depends on Ca(2+) as a cofactor. As to expression, present in corneal epithelial cells (at protein level).

It is found in the membrane. Its subcellular location is the cytoplasm. The protein localises to the cleavage furrow. It carries out the reaction a 1,2-diacyl-sn-glycero-3-phospho-(1D-myo-inositol-4,5-bisphosphate) + H2O = 1D-myo-inositol 1,4,5-trisphosphate + a 1,2-diacyl-sn-glycerol + H(+). Its activity is regulated as follows. Strongly activated by phosphatidic acid. Inhibited by phosphatidylethanolamine (PtdEtn), phosphatidylcholine (PtdCho), sphingomyelin and phosphatidylserine (PtdSer). Functionally, hydrolyzes the phosphatidylinositol 4,5-bisphosphate (PIP2) to generate 2 second messenger molecules diacylglycerol (DAG) and inositol 1,4,5-trisphosphate (IP3). DAG mediates the activation of protein kinase C (PKC), while IP3 releases Ca(2+) from intracellular stores. Essential for trophoblast and placental development. May participate in cytokinesis by hydrolyzing PIP2 at the cleavage furrow. Regulates neurite outgrowth through the inhibition of RhoA/Rho kinase signaling. The chain is 1-phosphatidylinositol 4,5-bisphosphate phosphodiesterase delta-3 from Homo sapiens (Human).